The following is a 395-amino-acid chain: Synaptotagmin-8 (395 aa).

The Extracellular segment spans residues 1-44 (MQADRSMKMGHVSNPLSTSAPVDATAGPNLIPDLITKIPWPRWI). The helical; Signal-anchor for type III membrane protein transmembrane segment at 45–65 (LFIAILAAGVLLVSCLLCVIC) threads the bilayer. The Cytoplasmic segment spans residues 66–395 (YCCHRQRHRK…PRLPLLRPRS (330 aa)). 2 C2 domains span residues 113 to 229 (PWGQ…ESWY) and 241 to 370 (QMGE…AQWH).

It belongs to the synaptotagmin family. In terms of assembly, homodimer or homooligomer. Homodimerization and homooligomerization do not depend on Ca(2+). Interacts with SYNCRIP isoform 2 C-terminus. Binds inositol 1,3,4,5-tetrakisphosphate (IP4). Binds to AP2 in a Ca(2+)-independent manner. Interacts with STX1A, STX1B and STX2; the interaction is Ca(2+)-dependent. Ubiquitous. Strongly expressed in heart, kidney, cerebral cortex, pancreas, and many insulin-secreting cells; lower expression in spleen. Broadly distributed in kidney.

The protein localises to the cell membrane. It localises to the cytoplasmic vesicle. It is found in the secretory vesicle. The protein resides in the acrosome. In terms of biological role, involved in the trafficking and exocytosis of secretory vesicles in non-neuronal tissues. Mediates Ca(2+)-regulation of exocytosis acrosomal reaction in sperm. May mediate Ca(2+)-regulation of exocytosis in insulin secreted cells. This Rattus norvegicus (Rat) protein is Synaptotagmin-8 (Syt8).